The following is a 184-amino-acid chain: UPF0316 protein YebE (184 aa).

A run of 3 helical transmembrane segments spans residues 9 to 29 (GIAM…FFTI), 41 to 61 (LAAG…SLVL), and 67 to 87 (IQNV…GMKI).

Belongs to the UPF0316 family.

Its subcellular location is the cell membrane. The chain is UPF0316 protein YebE (yebE) from Bacillus subtilis (strain 168).